A 185-amino-acid chain; its full sequence is MLEDPMKQNVLQPLDKAEFRNVVGHFASGVTIVTAAHDGVPYGATISAVTSLCDTPPMVLVCLNQKLGTHAAIRKARHFTINILGEDQASLAHTFATPGADKFADVAVHHRQHGPRLAEALAYLTCRVVDDLEGGTHRIFVAEVVEAQAGTGNPLSYYRGRFGHFVPYRNAMWRTTQADNAVSPH.

The protein belongs to the non-flavoprotein flavin reductase family. In terms of assembly, the 4-NP/4-NCA monooxygenase is composed of an oxygenase component NpcA and a reductase component NpcB.

The enzyme catalyses 4-nitrophenol + NADH + O2 + H(+) = 4-nitrocatechol + NAD(+) + H2O. The catalysed reaction is 4-nitrocatechol + NADPH + O2 = 2-hydroxy-1,4-benzoquinone + nitrite + NADP(+) + H2O. It carries out the reaction 4-nitrocatechol + NADH + O2 = 2-hydroxy-1,4-benzoquinone + nitrite + NAD(+) + H2O. It participates in aromatic compound metabolism. It functions in the pathway xenobiotic degradation. Its activity is regulated as follows. Inhibited by methimazole. Involved in the degradation of para-nitrophenol (4-NP). Catalyzes both the initial hydroxylation of 4-NP to produce 4-nitrocatechol (4-NCA) and the subsequent oxidative release of the nitro group from 4-NCA to produce 2-hydroxy-1,4-benzoquinone. It can also use 4-nitroresorcinol as substrate with a rate of nitrite release similar to that observed with the two physiological substrates, 4-PN and 4-NCA. The chain is 4-nitrophenol 4-monooxygenase/4-nitrocatechol 2-monooxygenase, reductase component (npcB) from Rhodococcus opacus (Nocardia opaca).